The sequence spans 505 residues: ATP synthase subunit alpha, chloroplastic (505 aa).

Residue 170–177 participates in ATP binding; that stretch reads GDRQTGKT.

This sequence belongs to the ATPase alpha/beta chains family. In terms of assembly, F-type ATPases have 2 components, CF(1) - the catalytic core - and CF(0) - the membrane proton channel. CF(1) has five subunits: alpha(3), beta(3), gamma(1), delta(1), epsilon(1). CF(0) has four main subunits: a, b, b' and c.

Its subcellular location is the plastid. The protein resides in the chloroplast thylakoid membrane. It catalyses the reaction ATP + H2O + 4 H(+)(in) = ADP + phosphate + 5 H(+)(out). In terms of biological role, produces ATP from ADP in the presence of a proton gradient across the membrane. The alpha chain is a regulatory subunit. This Carica papaya (Papaya) protein is ATP synthase subunit alpha, chloroplastic.